A 385-amino-acid chain; its full sequence is Succinate--CoA ligase [ADP-forming] subunit beta (385 aa).

Residues 9 to 237 (KEILRQFGVN…LEAEHPLEIE (229 aa)) enclose the ATP-grasp domain. ATP is bound by residues Lys-45, 52–54 (GRG), Val-94, and Glu-101. Mg(2+) contacts are provided by Asn-192 and Asp-206. Residues Asn-257 and 314-316 (GIT) contribute to the substrate site.

Belongs to the succinate/malate CoA ligase beta subunit family. Heterotetramer of two alpha and two beta subunits. Mg(2+) is required as a cofactor.

It carries out the reaction succinate + ATP + CoA = succinyl-CoA + ADP + phosphate. The enzyme catalyses GTP + succinate + CoA = succinyl-CoA + GDP + phosphate. The protein operates within carbohydrate metabolism; tricarboxylic acid cycle; succinate from succinyl-CoA (ligase route): step 1/1. Its function is as follows. Succinyl-CoA synthetase functions in the citric acid cycle (TCA), coupling the hydrolysis of succinyl-CoA to the synthesis of either ATP or GTP and thus represents the only step of substrate-level phosphorylation in the TCA. The beta subunit provides nucleotide specificity of the enzyme and binds the substrate succinate, while the binding sites for coenzyme A and phosphate are found in the alpha subunit. The chain is Succinate--CoA ligase [ADP-forming] subunit beta from Deinococcus deserti (strain DSM 17065 / CIP 109153 / LMG 22923 / VCD115).